The sequence spans 144 residues: UPF0102 protein sce2912 (144 aa).

Belongs to the UPF0102 family.

This chain is UPF0102 protein sce2912, found in Sorangium cellulosum (strain So ce56) (Polyangium cellulosum (strain So ce56)).